Consider the following 291-residue polypeptide: Formamidopyrimidine-DNA glycosylase (291 aa).

The active-site Schiff-base intermediate with DNA is P2. E3 acts as the Proton donor in catalysis. K61 (proton donor; for beta-elimination activity) is an active-site residue. Positions 103, 123, and 165 each coordinate DNA. Residues 251–285 (EVYGRGGQACSRCASTIRRDAFMNRSSFSCPACQP) form an FPG-type zinc finger. Residue R275 is the Proton donor; for delta-elimination activity of the active site.

The protein belongs to the FPG family. In terms of assembly, monomer. Requires Zn(2+) as cofactor.

It catalyses the reaction Hydrolysis of DNA containing ring-opened 7-methylguanine residues, releasing 2,6-diamino-4-hydroxy-5-(N-methyl)formamidopyrimidine.. It carries out the reaction 2'-deoxyribonucleotide-(2'-deoxyribose 5'-phosphate)-2'-deoxyribonucleotide-DNA = a 3'-end 2'-deoxyribonucleotide-(2,3-dehydro-2,3-deoxyribose 5'-phosphate)-DNA + a 5'-end 5'-phospho-2'-deoxyribonucleoside-DNA + H(+). In terms of biological role, involved in base excision repair of DNA damaged by oxidation or by mutagenic agents. Acts as a DNA glycosylase that recognizes and removes damaged bases. Has a preference for oxidized purines, such as 7,8-dihydro-8-oxoguanine (8-oxoG). Has AP (apurinic/apyrimidinic) lyase activity and introduces nicks in the DNA strand. Cleaves the DNA backbone by beta-delta elimination to generate a single-strand break at the site of the removed base with both 3'- and 5'-phosphates. The protein is Formamidopyrimidine-DNA glycosylase of Parafrankia sp. (strain EAN1pec).